A 57-amino-acid chain; its full sequence is Plasma membrane proteolipid 3 (57 aa).

The chain crosses the membrane as a helical span at residues 34–54; it reads INILLTILGYLPGIVHALYII.

The protein belongs to the UPF0057 (PMP3) family.

Its subcellular location is the cell membrane. Plays a role in the regulation of membrane potential. Could mediate a proton leak. In Neurospora crassa (strain ATCC 24698 / 74-OR23-1A / CBS 708.71 / DSM 1257 / FGSC 987), this protein is Plasma membrane proteolipid 3 (pmp-1).